Reading from the N-terminus, the 132-residue chain is Acid shock protein (132 aa).

The first 21 residues, 1-21 (MKKVLALIVAATMGLSSVAFA), serve as a signal peptide directing secretion. Residues 22 to 69 (AETTAAATAAPAATSTTAAPAVEKAAPAKATHHKKHKATKQTTEQKAQ) constitute a propeptide that is removed on maturation. Residues 30-50 (AAPAATSTTAAPAVEKAAPAK) are compositionally biased toward low complexity. The segment at 30-132 (AAPAATSTTA…AKKSATAPAA (103 aa)) is disordered. Residues 51–60 (ATHHKKHKAT) are compositionally biased toward basic residues. Residues 61–99 (KQTTEQKAQAAKKAVKKAPAQKAQAAKKAVKKAPVQKAQ) are compositionally biased toward low complexity. Positions 100-124 (AAKKHVKKAPAQKAQAAKKHHKTAK) are enriched in basic residues.

The protein belongs to the Asr family. Post-translationally, proteolytic processing gives rise to the active protein.

The protein localises to the periplasm. In terms of biological role, required for growth and/or survival at acidic conditions. The chain is Acid shock protein from Yersinia enterocolitica serotype O:8 / biotype 1B (strain NCTC 13174 / 8081).